The chain runs to 98 residues: Defensin-like protein 219 (98 aa).

Residues 1 to 16 form the signal peptide; sequence MKTIFVFLTLAVLVSS. Cystine bridges form between cysteine 68–cysteine 85, cysteine 71–cysteine 90, and cysteine 75–cysteine 92.

It belongs to the DEFL family.

Its subcellular location is the secreted. In Arabidopsis thaliana (Mouse-ear cress), this protein is Defensin-like protein 219.